The following is a 169-amino-acid chain: Putative tRNA (cytidine(34)-2'-O)-methyltransferase (169 aa).

The S-adenosyl-L-methionine site is built by Ile-79, Gly-104, Ile-125, and Ser-133.

The protein belongs to the class IV-like SAM-binding methyltransferase superfamily. RNA methyltransferase TrmH family. TrmL subfamily.

It localises to the cytoplasm. The enzyme catalyses cytidine(34) in tRNA + S-adenosyl-L-methionine = 2'-O-methylcytidine(34) in tRNA + S-adenosyl-L-homocysteine + H(+). It carries out the reaction 5-carboxymethylaminomethyluridine(34) in tRNA(Leu) + S-adenosyl-L-methionine = 5-carboxymethylaminomethyl-2'-O-methyluridine(34) in tRNA(Leu) + S-adenosyl-L-homocysteine + H(+). Its function is as follows. Could methylate the ribose at the nucleotide 34 wobble position in tRNA. The polypeptide is Putative tRNA (cytidine(34)-2'-O)-methyltransferase (Listeria innocua serovar 6a (strain ATCC BAA-680 / CLIP 11262)).